Here is a 237-residue protein sequence, read N- to C-terminus: Phosphoribosylaminoimidazole-succinocarboxamide synthase (237 aa).

The protein belongs to the SAICAR synthetase family.

The enzyme catalyses 5-amino-1-(5-phospho-D-ribosyl)imidazole-4-carboxylate + L-aspartate + ATP = (2S)-2-[5-amino-1-(5-phospho-beta-D-ribosyl)imidazole-4-carboxamido]succinate + ADP + phosphate + 2 H(+). Its pathway is purine metabolism; IMP biosynthesis via de novo pathway; 5-amino-1-(5-phospho-D-ribosyl)imidazole-4-carboxamide from 5-amino-1-(5-phospho-D-ribosyl)imidazole-4-carboxylate: step 1/2. The sequence is that of Phosphoribosylaminoimidazole-succinocarboxamide synthase from Citrobacter koseri (strain ATCC BAA-895 / CDC 4225-83 / SGSC4696).